Here is a 135-residue protein sequence, read N- to C-terminus: Succinate dehydrogenase assembly factor 2, mitochondrial (135 aa).

Belongs to the SDHAF2 family. Interacts with the flavoprotein subunit within the SDH catalytic dimer.

Its subcellular location is the mitochondrion matrix. Plays an essential role in the assembly of succinate dehydrogenase (SDH), an enzyme complex (also referred to as respiratory complex II) that is a component of both the tricarboxylic acid (TCA) cycle and the mitochondrial electron transport chain, and which couples the oxidation of succinate to fumarate with the reduction of ubiquinone (coenzyme Q) to ubiquinol. Required for flavinylation (covalent attachment of FAD) of the flavoprotein subunit of the SDH catalytic dimer. The chain is Succinate dehydrogenase assembly factor 2, mitochondrial from Meyerozyma guilliermondii (strain ATCC 6260 / CBS 566 / DSM 6381 / JCM 1539 / NBRC 10279 / NRRL Y-324) (Yeast).